The chain runs to 473 residues: ATP synthase subunit beta (473 aa).

Residue 153–160 (GGAGVGKT) participates in ATP binding.

The protein belongs to the ATPase alpha/beta chains family. F-type ATPases have 2 components, CF(1) - the catalytic core - and CF(0) - the membrane proton channel. CF(1) has five subunits: alpha(3), beta(3), gamma(1), delta(1), epsilon(1). CF(0) has three main subunits: a(1), b(2) and c(9-12). The alpha and beta chains form an alternating ring which encloses part of the gamma chain. CF(1) is attached to CF(0) by a central stalk formed by the gamma and epsilon chains, while a peripheral stalk is formed by the delta and b chains.

Its subcellular location is the cell inner membrane. The enzyme catalyses ATP + H2O + 4 H(+)(in) = ADP + phosphate + 5 H(+)(out). In terms of biological role, produces ATP from ADP in the presence of a proton gradient across the membrane. The catalytic sites are hosted primarily by the beta subunits. The polypeptide is ATP synthase subunit beta (Rickettsia conorii (strain ATCC VR-613 / Malish 7)).